Consider the following 85-residue polypeptide: Conotoxin Mi15b (85 aa).

The first 23 residues, 1 to 23 (MEKLTVLILVAIVLLTIQVLGQS), serve as a signal peptide directing secretion. The propeptide occupies 24–49 (DRDKHPKRRPRQYATKRLSALMKGHR). Gln-50 is subject to Pyrrolidone carboxylic acid.

Belongs to the conotoxin O2 superfamily. In terms of processing, contains 4 disulfide bonds. In terms of tissue distribution, expressed by the venom duct.

It localises to the secreted. In Conus miles (Soldier cone), this protein is Conotoxin Mi15b.